The primary structure comprises 185 residues: CD160 antigen (185 aa).

The first 27 residues, 1 to 27 (MQRILMAPGQSCCALAILLAIVNFQHG), serve as a signal peptide directing secretion. The region spanning 28–136 (GCIHVTSSAS…HGHFLSVLVT (109 aa)) is the Ig-like V-type domain. 2 cysteine pairs are disulfide-bonded: C47–C115 and C64–C71. N138 and N156 each carry an N-linked (GlcNAc...) asparagine glycan. A lipid anchor (GPI-anchor amidated serine) is attached at S160. Positions 161-185 (SGFLQVKAWGMLVTSLVALQALYTL) are cleaved as a propeptide — removed in mature form.

As to quaternary structure, homomultimer; disulfide-linked. Interacts with classical and non-classical MHC class I molecules. Interacts with TNFRSF14 (via cysteine-rich domain 1); this interaction is direct. Interacts with LCK and CD247/CD3 zeta chain. As to expression, expressed in resting and activated NK cell subsets (at protein level). Expressed in resting NKT cells (at protein level). Expressed in activated CD8+ T cells (at protein level). Highly expressed in intraepithelial lymphocyte (IEL) subsets, particularly in innate-like CD8A-positive IELs (at protein level).

The protein resides in the cell membrane. The protein localises to the secreted. Its function is as follows. Receptor on immune cells capable to deliver stimulatory or inhibitory signals that regulate cell activation and differentiation. Exists as a GPI-anchored and as a transmembrane form, each likely initiating distinct signaling pathways via phosphoinositol 3-kinase in activated NK cells and via LCK and CD247/CD3 zeta chain in activated T cells. Receptor for both classical and non-classical MHC class I molecules. Receptor or ligand for TNF superfamily member TNFRSF14, participating in bidirectional cell-cell contact signaling between antigen presenting cells and lymphocytes. Upon ligation of TNFRSF14, provides stimulatory signal to NK cells enhancing IFNG production and anti-tumor immune response. On activated CD4+ T cells, interacts with TNFRSF14 and down-regulates CD28 costimulatory signaling, restricting memory and alloantigen-specific immune response. In the context of bacterial infection, acts as a ligand for TNFRSF14 on epithelial cells, triggering the production of antimicrobial proteins and pro-inflammatory cytokines. In terms of biological role, the soluble GPI-cleaved form, usually released by activated lymphocytes, might play an immune regulatory role by limiting lymphocyte effector functions. The polypeptide is CD160 antigen (Mus musculus (Mouse)).